The sequence spans 75 residues: Putative defensin-like protein 55 (75 aa).

An N-terminal signal peptide occupies residues 1-19 (MNITKAYVIFFLVVILTNS). Cystine bridges form between cysteine 39/cysteine 73, cysteine 43/cysteine 66, cysteine 52/cysteine 71, and cysteine 56/cysteine 72.

Belongs to the DEFL family.

Its subcellular location is the secreted. This Arabidopsis thaliana (Mouse-ear cress) protein is Putative defensin-like protein 55.